The chain runs to 338 residues: Probable tRNA pseudouridine synthase B (338 aa).

Residue aspartate 82 is the Nucleophile of the active site. In terms of domain architecture, PUA spans 250–325 (LPKVWIRDSA…IAVDVDKVFM (76 aa)).

This sequence belongs to the pseudouridine synthase TruB family. Type 2 subfamily.

The enzyme catalyses uridine(55) in tRNA = pseudouridine(55) in tRNA. Its function is as follows. Could be responsible for synthesis of pseudouridine from uracil-55 in the psi GC loop of transfer RNAs. The chain is Probable tRNA pseudouridine synthase B from Thermococcus kodakarensis (strain ATCC BAA-918 / JCM 12380 / KOD1) (Pyrococcus kodakaraensis (strain KOD1)).